A 355-amino-acid polypeptide reads, in one-letter code: MTKNIAQAAVKFEQWQPKIEQESYLTINSLECHTGGEPLRIITSGFPVLKGNTILAKANDCKQNYDQLRRALMFEPRGHADMYGAIITDAERDDSHFGAVFIHNEGYSSMCGHAVIALTKTAVESGVVARTGDVTQVVIDVPCGQIYAMAYSHNNVVKHVSFQCVPSFVYAKDQQVEVDGIGMVQFDIAYGGAFYAYVQASSLGLSLVPEQQEKLIAYGRKIKQAIIPQFEINHPTTAELSFLYGVIFIDDSPNQDVHSRNVCIFADGELDRSPTGSGVSGRIALHHAKQQIVLNETITIESILASSFSVRAIETVCFAGFDAVIPEVTGDAYVCGKGQWFINAEDPLKYGFLLR.

Cys111 functions as the Proton acceptor in the catalytic mechanism. Substrate-binding positions include 112–113 (GH) and 276–277 (GS).

The protein belongs to the proline racemase family. In terms of assembly, homodimer.

It catalyses the reaction trans-3-hydroxy-L-proline = 1-pyrroline-2-carboxylate + H2O. Its function is as follows. Catalyzes the dehydration of trans-3-hydroxy-L-proline (t3LHyp) to Delta(1)-pyrroline-2-carboxylate (Pyr2C). Together with LhpI, is involved in a metabolic pathway that converts t3LHyp to L-proline. The sequence is that of Trans-3-hydroxy-L-proline dehydratase from Colwellia psychrerythraea (strain 34H / ATCC BAA-681) (Vibrio psychroerythus).